A 119-amino-acid chain; its full sequence is MKKEHRIKRSDEFSRVFNEGFSVANRQFVIYVLPKEGQDFFRVGLSVSKKIGNAVTRNRVKRLIRTFFQEHEQAISGERDYVIIARKPAADMTYEQVKGSLWHVCKKAKIIQPKVRAHK.

Belongs to the RnpA family. Consists of a catalytic RNA component (M1 or rnpB) and a protein subunit.

The catalysed reaction is Endonucleolytic cleavage of RNA, removing 5'-extranucleotides from tRNA precursor.. Its function is as follows. RNaseP catalyzes the removal of the 5'-leader sequence from pre-tRNA to produce the mature 5'-terminus. It can also cleave other RNA substrates such as 4.5S RNA. The protein component plays an auxiliary but essential role in vivo by binding to the 5'-leader sequence and broadening the substrate specificity of the ribozyme. In Halalkalibacterium halodurans (strain ATCC BAA-125 / DSM 18197 / FERM 7344 / JCM 9153 / C-125) (Bacillus halodurans), this protein is Ribonuclease P protein component.